We begin with the raw amino-acid sequence, 292 residues long: Probable septum site-determining protein MinC (292 aa).

Residues 112–188 (DTAPPNDVAT…PQSSSALVIT (77 aa)) form a disordered region. The span at 128–137 (EATAEAAAKA) shows a compositional bias: low complexity. The span at 140-150 (QDDEAYGEQAD) shows a compositional bias: acidic residues. The span at 171–185 (ANRPTATPPQSSSAL) shows a compositional bias: polar residues.

The protein belongs to the MinC family. Interacts with MinD and FtsZ.

In terms of biological role, cell division inhibitor that blocks the formation of polar Z ring septums. Rapidly oscillates between the poles of the cell to destabilize FtsZ filaments that have formed before they mature into polar Z rings. Prevents FtsZ polymerization. The protein is Probable septum site-determining protein MinC of Bordetella bronchiseptica (strain ATCC BAA-588 / NCTC 13252 / RB50) (Alcaligenes bronchisepticus).